Here is a 488-residue protein sequence, read N- to C-terminus: MSDQVSDMLEKLELQKEKNQAAATEAKVEEVKEDDKKDVKEELNEDDKKVAKEDDKKEDAKEESKEDAEENNLIQTEYEVRVKLADLQADPNSPLYSAKRFEDLGLDENLLKGLYAMKFNKPSKIQEKALPLLLSDPPHNMIGQSQSGTGKTGAFSLTMLSRVDPNLKAVQCICLAPSRELARQTLDVVDEMKKFTDITTHLIVPESTERGQKVTSQILVGTPGSVAGLLQKKQIDAKHVKVFVLDEADNMVDSSMGSTCARIKKYLPSSTQVVLFSATFPESVLDLAGKMCPNPNEIRLKANELNVDAITQLYMDCEDGEEKFKMLEELYSMLTIASSVIFVAQRSTANALYQRMSKNGHKVSLLHSDLSVDERDRLMDDFRFGRSKVLISTNVIARGIDIATVSMVVNYDLPTDKNGKPDPETYLHRIGRTGRFGRSGVSISFVHDEASFEVLDSIQQSLGMTLTQVPTDDIDEVEEIIKKAIKGK.

A disordered region spans residues 1–73; it reads MSDQVSDMLE…SKEDAEENNL (73 aa). 2 stretches are compositionally biased toward basic and acidic residues: residues 8–19 and 26–64; these read MLEKLELQKEKN and AKVE…KEES. The Q motif signature appears at 99–127; it reads KRFEDLGLDENLLKGLYAMKFNKPSKIQE. Positions 132 to 298 constitute a Helicase ATP-binding domain; sequence LLLSDPPHNM…GKMCPNPNEI (167 aa). ATP is bound at residue 145 to 152; sequence SQSGTGKT. The DEAD box signature appears at 246–249; the sequence is DEAD. Residues 326–477 form the Helicase C-terminal domain; it reads MLEELYSMLT…QVPTDDIDEV (152 aa).

This sequence belongs to the DEAD box helicase family. DDX19/DBP5 subfamily. Associates with the nuclear pore complex.

It is found in the cytoplasm. The protein resides in the nucleus. It localises to the nuclear pore complex. The protein localises to the nucleus membrane. The catalysed reaction is ATP + H2O = ADP + phosphate + H(+). In terms of biological role, ATP-dependent RNA helicase associated with the nuclear pore complex and essential for mRNA export from the nucleus. May participate in a terminal step of mRNA export through the removal of proteins that accompany mRNA through the nucleopore complex. May also be involved in early transcription. This Yarrowia lipolytica (strain CLIB 122 / E 150) (Yeast) protein is ATP-dependent RNA helicase DBP5 (DBP5).